The chain runs to 365 residues: MQKPTRPQPKAGVLDIAAYVPGKEHVEGVAKVYKLSSNETPLGPSPHAREAYRHAGEKLELYPDGQALALRQAIAETQGLNISNILCGNGSDELLGLLCQTYLAPGDETIITEHGFAVYKIQTLAAGATPVTVKEKNERIDVDAILAGVTARTKIVFIANPANPTGTYLPFEEVRRLHAGLPQHVLLVLDAAYAEYVRRNDYEAGLELVSSNENVVMTRTFSKIHGLPGLRIGWIYAPLHIIDAMNRIRGPFNMNSAAIAAGAAAIRDRAHVEKSVAYNEKWLAWLTEEFTRLGLRVTPSVTNFLLIHFPDDAAHSADKADEWLSRRGYILRRVGGYGFPNALRMTVGPEEANRGVVAALTEFLK.

An N6-(pyridoxal phosphate)lysine modification is found at Lys223.

It belongs to the class-II pyridoxal-phosphate-dependent aminotransferase family. Histidinol-phosphate aminotransferase subfamily. Homodimer. The cofactor is pyridoxal 5'-phosphate.

It catalyses the reaction L-histidinol phosphate + 2-oxoglutarate = 3-(imidazol-4-yl)-2-oxopropyl phosphate + L-glutamate. It functions in the pathway amino-acid biosynthesis; L-histidine biosynthesis; L-histidine from 5-phospho-alpha-D-ribose 1-diphosphate: step 7/9. The polypeptide is Histidinol-phosphate aminotransferase (Brucella abortus (strain 2308)).